A 184-amino-acid polypeptide reads, in one-letter code: dCTP deaminase (184 aa).

Residues 97–102 and D113 contribute to the dCTP site; that span reads RSTFAR. Residue E123 is the Proton donor/acceptor of the active site. Positions 155 and 162 each coordinate dCTP.

The protein belongs to the dCTP deaminase family. In terms of assembly, homotrimer.

It catalyses the reaction dCTP + H2O + H(+) = dUTP + NH4(+). It participates in pyrimidine metabolism; dUMP biosynthesis; dUMP from dCTP (dUTP route): step 1/2. Catalyzes the deamination of dCTP to dUTP. The polypeptide is dCTP deaminase (Saccharolobus solfataricus (strain ATCC 35092 / DSM 1617 / JCM 11322 / P2) (Sulfolobus solfataricus)).